A 456-amino-acid chain; its full sequence is Methylenetetrahydrofolate--tRNA-(uracil-5-)-methyltransferase TrmFO (456 aa).

Residue 12–17 (GGGLAG) coordinates FAD.

Belongs to the MnmG family. TrmFO subfamily. FAD is required as a cofactor.

It is found in the cytoplasm. The catalysed reaction is uridine(54) in tRNA + (6R)-5,10-methylene-5,6,7,8-tetrahydrofolate + NADH + H(+) = 5-methyluridine(54) in tRNA + (6S)-5,6,7,8-tetrahydrofolate + NAD(+). It catalyses the reaction uridine(54) in tRNA + (6R)-5,10-methylene-5,6,7,8-tetrahydrofolate + NADPH + H(+) = 5-methyluridine(54) in tRNA + (6S)-5,6,7,8-tetrahydrofolate + NADP(+). Catalyzes the folate-dependent formation of 5-methyl-uridine at position 54 (M-5-U54) in all tRNAs. In Picosynechococcus sp. (strain ATCC 27264 / PCC 7002 / PR-6) (Agmenellum quadruplicatum), this protein is Methylenetetrahydrofolate--tRNA-(uracil-5-)-methyltransferase TrmFO.